A 136-amino-acid chain; its full sequence is Large ribosomal subunit protein uL16 (136 aa).

Belongs to the universal ribosomal protein uL16 family. Part of the 50S ribosomal subunit.

Binds 23S rRNA and is also seen to make contacts with the A and possibly P site tRNAs. The protein is Large ribosomal subunit protein uL16 of Rickettsia bellii (strain OSU 85-389).